A 358-amino-acid polypeptide reads, in one-letter code: Pre-mRNA-splicing factor spp2 (358 aa).

Disordered regions lie at residues 1 to 250 (MTDQ…RAVP) and 298 to 358 (AWNQ…RGDR). Residues 24 to 40 (KTKKPSRPTHTRRHHAR) show a composition bias toward basic residues. Basic and acidic residues-rich tracts occupy residues 80-137 (LENR…DASR) and 145-160 (RSRDRDHKPKDPKDLQ). Over residues 174–185 (NPKSTTTATSSF) the composition is skewed to polar residues. 2 stretches are compositionally biased toward basic and acidic residues: residues 233–246 (SSHDRDRSPDHSDY) and 309–358 (GDSR…RGDR).

The protein belongs to the SPP2 family. As to quaternary structure, associated with the spliceosome.

It is found in the nucleus. Its function is as follows. Involved in spliceosome maturation and the first step of pre-mRNA splicing. The polypeptide is Pre-mRNA-splicing factor spp2 (msp-40) (Neurospora crassa (strain ATCC 24698 / 74-OR23-1A / CBS 708.71 / DSM 1257 / FGSC 987)).